The primary structure comprises 329 residues: Ketol-acid reductoisomerase (NADP(+)) (329 aa).

One can recognise a KARI N-terminal Rossmann domain in the interval 2–182; it reads TQLFYDTDAD…GGTRAGILET (181 aa). NADP(+) is bound by residues 25 to 28, Ser-51, Ser-53, and 83 to 86; these read YGSQ and DEFQ. Residue His-108 is part of the active site. Gly-134 contributes to the NADP(+) binding site. The KARI C-terminal knotted domain maps to 183-328; that stretch reads NFKEETETDL…KGLRSMFSWL (146 aa). Positions 191, 195, 227, and 231 each coordinate Mg(2+). Residue Ser-252 coordinates substrate.

Belongs to the ketol-acid reductoisomerase family. The cofactor is Mg(2+).

The catalysed reaction is (2R)-2,3-dihydroxy-3-methylbutanoate + NADP(+) = (2S)-2-acetolactate + NADPH + H(+). The enzyme catalyses (2R,3R)-2,3-dihydroxy-3-methylpentanoate + NADP(+) = (S)-2-ethyl-2-hydroxy-3-oxobutanoate + NADPH + H(+). Its pathway is amino-acid biosynthesis; L-isoleucine biosynthesis; L-isoleucine from 2-oxobutanoate: step 2/4. It functions in the pathway amino-acid biosynthesis; L-valine biosynthesis; L-valine from pyruvate: step 2/4. Its function is as follows. Involved in the biosynthesis of branched-chain amino acids (BCAA). Catalyzes an alkyl-migration followed by a ketol-acid reduction of (S)-2-acetolactate (S2AL) to yield (R)-2,3-dihydroxy-isovalerate. In the isomerase reaction, S2AL is rearranged via a Mg-dependent methyl migration to produce 3-hydroxy-3-methyl-2-ketobutyrate (HMKB). In the reductase reaction, this 2-ketoacid undergoes a metal-dependent reduction by NADPH to yield (R)-2,3-dihydroxy-isovalerate. This is Ketol-acid reductoisomerase (NADP(+)) from Prochlorococcus marinus (strain MIT 9312).